Reading from the N-terminus, the 160-residue chain is Large ribosomal subunit protein uL22c (160 aa).

Belongs to the universal ribosomal protein uL22 family. Part of the 50S ribosomal subunit.

It localises to the plastid. The protein resides in the chloroplast. This protein binds specifically to 23S rRNA. Its function is as follows. The globular domain of the protein is located near the polypeptide exit tunnel on the outside of the subunit, while an extended beta-hairpin is found that lines the wall of the exit tunnel in the center of the 70S ribosome. The protein is Large ribosomal subunit protein uL22c (rpl22) of Aethionema cordifolium (Lebanon stonecress).